Consider the following 968-residue polypeptide: MTQGKQPDGVARTSYKDTLNLLQTSFGMRANASQREPELQEFWKQQGIDLELGLNNQGQNFTLHDGPPYANGALHMGHALNKVLKDIINKHQILRGRQVRFVPGWDCHGLPIELKVLQNLNQEQREALTPLKLRKKAAAFARKQVDSQMAGFRRWGIWADWEHPYLTLQKEYEAAQIQVFGKMFQKGYIYRGLKPVHWSPSSRTALAEAELEYPDGHTSPSVYVAFPAAKLPEKLRTSLGNQGLELPNNGLELGQALQIAIWTTTPWTLPANLAVSVNEKLDYSFAVDNQGRLLLVAAELLPSLRDTLALELTARATVKGALLAGLIYKHPLLDRDSPIVIGGEYITTESGTGLVHTAPGHGVDDFNTGQKHDLGMLCPVDESGTMTSEAGPFAGLNVLKDANPTIIAALEERGALLKHEPYAHRYPYDWRTKKPTIFRATEQWFASVEGFRNEALTAINSVEWLPASGRNRMEAMVRERGDWCISRQRTWGVPIPVFYEREGNEVLLNDETLAHVKALITEHGADVWWERNEVELLPPAYAAEAERWRKGTDTMDVWFDSGSSWAAVASQQEGLAYPTELYLEGSDQHRGWFQSSLLTSVAINSQAPYRQVLTHGFALDEKGRKMSKSLGNVVDPAVIIDGGKNQKQEPPYGADVLRLWVSSVDYSADVPIGASILRQIADVYRKVRNTSRYLLGNLHDFDPERDAIPVPELPLLDRWMLQRTAEVMDEISTAFDRYEFYRFFQLLQSYCVVDLSNFYLDIAKDRLYVSSPSERRRRSCQTAMALIIERLAGAISPVLCHMAEDIWQNLPYSVAEDSVFRRGWPTVPETWRDPSMMAPMHQLRELRSAVNRVLEDCRSQGELGAALEAAVRLEAHSEALQEALDWLRQQGDPDVDGLRDWLLVSHLQVGGEPWAELLASQDNALATIEVARARGSKCERCWHYETDVGQHTTHPTLCGRCVGVLEHQ.

Positions 68–78 match the 'HIGH' region motif; sequence PYANGALHMGH. E584 is a binding site for L-isoleucyl-5'-AMP. Residues 625–629 carry the 'KMSKS' region motif; sequence KMSKS. Position 628 (K628) interacts with ATP. Residues C938, C941, C958, and C961 each contribute to the Zn(2+) site.

It belongs to the class-I aminoacyl-tRNA synthetase family. IleS type 1 subfamily. In terms of assembly, monomer. Zn(2+) serves as cofactor.

It is found in the cytoplasm. It catalyses the reaction tRNA(Ile) + L-isoleucine + ATP = L-isoleucyl-tRNA(Ile) + AMP + diphosphate. Catalyzes the attachment of isoleucine to tRNA(Ile). As IleRS can inadvertently accommodate and process structurally similar amino acids such as valine, to avoid such errors it has two additional distinct tRNA(Ile)-dependent editing activities. One activity is designated as 'pretransfer' editing and involves the hydrolysis of activated Val-AMP. The other activity is designated 'posttransfer' editing and involves deacylation of mischarged Val-tRNA(Ile). The polypeptide is Isoleucine--tRNA ligase (Prochlorococcus marinus (strain MIT 9313)).